The following is a 1016-amino-acid chain: UvrABC system protein A (1016 aa).

32–39 (GVSGSGKS) lines the ATP pocket. The segment at 259 to 286 (CPEHGSVLEELEPRSFSFNSPYGACGDC) adopts a C4-type zinc-finger fold. ABC transporter domains are found at residues 315-627 (WTKK…KNSL) and 647-975 (GNGK…EYLR). 679–686 (GPSGSGKS) is an ATP binding site. The C4-type zinc finger occupies 778–804 (CEHCKGDGVMKIEMNFLPDIYVPCEVC). A disordered region spans residues 984 to 1016 (EPRARGEKAEKPAKAKAPAKKRTKKQTELVEAD). A compositionally biased stretch (basic and acidic residues) spans 985–996 (PRARGEKAEKPA).

This sequence belongs to the ABC transporter superfamily. UvrA family. Forms a heterotetramer with UvrB during the search for lesions.

It localises to the cytoplasm. Its function is as follows. The UvrABC repair system catalyzes the recognition and processing of DNA lesions. UvrA is an ATPase and a DNA-binding protein. A damage recognition complex composed of 2 UvrA and 2 UvrB subunits scans DNA for abnormalities. When the presence of a lesion has been verified by UvrB, the UvrA molecules dissociate. The chain is UvrABC system protein A from Deinococcus radiodurans (strain ATCC 13939 / DSM 20539 / JCM 16871 / CCUG 27074 / LMG 4051 / NBRC 15346 / NCIMB 9279 / VKM B-1422 / R1).